A 595-amino-acid polypeptide reads, in one-letter code: Ketol-acid reductoisomerase, chloroplastic (595 aa).

Residues 1–72 (MAATAATTFS…GGGSALSAQM (72 aa)) constitute a chloroplast transit peptide. The KARI N-terminal Rossmann domain occupies 108-306 (VRGGRNLFPL…ALGSPFTFAT (199 aa)). Residues 129 to 136 (GVIGWGSQ), 162 to 167 (RKGSNS), and 201 to 205 (SDSAQ) contribute to the NADP(+) site. Residue histidine 226 is part of the active site. 2 consecutive KARI C-terminal knotted domains span residues 307 to 455 (TLEQ…RPAG) and 456 to 592 (DLGP…RPEL). Positions 315, 319, 492, and 496 each coordinate Mg(2+). Serine 518 provides a ligand contact to substrate.

This sequence belongs to the ketol-acid reductoisomerase family. As to quaternary structure, homodimer. The cofactor is Mg(2+).

It localises to the plastid. It is found in the chloroplast. The enzyme catalyses (2R)-2,3-dihydroxy-3-methylbutanoate + NADP(+) = (2S)-2-acetolactate + NADPH + H(+). It carries out the reaction (2R,3R)-2,3-dihydroxy-3-methylpentanoate + NADP(+) = (S)-2-ethyl-2-hydroxy-3-oxobutanoate + NADPH + H(+). The protein operates within amino-acid biosynthesis; L-isoleucine biosynthesis; L-isoleucine from 2-oxobutanoate: step 2/4. Its pathway is amino-acid biosynthesis; L-valine biosynthesis; L-valine from pyruvate: step 2/4. The chain is Ketol-acid reductoisomerase, chloroplastic (AHRI) from Spinacia oleracea (Spinach).